A 487-amino-acid polypeptide reads, in one-letter code: Sugar transporter ERD6-like 6 (487 aa).

An N-acetylserine modification is found at Ser-2. 12 helical membrane-spanning segments follow: residues 46–66 (ISVLACVLIVALGPIQFGFTC), 89–109 (VFGSLSNVGAMVGAIASGQIA), 115–135 (KGSLMIAAIPNIIGWLCISFA), 146–166 (LLEGFGVGIISYTVPVYIAEI), 178–198 (VNQLSVTIGIMLAYLLGLFVP), 201–221 (ILAVLGILPCTLLIPGLFFIP), 284–304 (LMVGIGLLVLQQLGGINGVLF), 320–340 (AATFGVGAIQVVATAISTWLV), 347–367 (LLLTISSVGMTISLVIVAAAF), 389–409 (VGVVAMVVFFSLGMGPIPWLI), 425–445 (IATLANWFFSWLITMTANLLL), and 451–471 (GTFTLYGLVCAFTVVFVTLWV).

The protein belongs to the major facilitator superfamily. Sugar transporter (TC 2.A.1.1) family.

The protein localises to the membrane. Functionally, sugar transporter. The chain is Sugar transporter ERD6-like 6 from Arabidopsis thaliana (Mouse-ear cress).